Consider the following 164-residue polypeptide: HTH-type transcriptional regulator PapX (164 aa).

The region spanning 25–159 is the HTH marR-type domain; that stretch reads EHLLMQLCIR…FEVISKKLLA (135 aa).

Its subcellular location is the cytoplasm. This is HTH-type transcriptional regulator PapX (papX) from Escherichia coli.